Consider the following 433-residue polypeptide: Enolase (433 aa).

Residue Gln167 coordinates (2R)-2-phosphoglycerate. The Proton donor role is filled by Glu209. Residues Asp246, Glu291, and Asp318 each coordinate Mg(2+). (2R)-2-phosphoglycerate-binding residues include Lys343, Arg372, Ser373, and Lys394. The active-site Proton acceptor is the Lys343.

It belongs to the enolase family. Component of the RNA degradosome, a multiprotein complex involved in RNA processing and mRNA degradation. Requires Mg(2+) as cofactor.

The protein resides in the cytoplasm. The protein localises to the secreted. It localises to the cell surface. The catalysed reaction is (2R)-2-phosphoglycerate = phosphoenolpyruvate + H2O. The protein operates within carbohydrate degradation; glycolysis; pyruvate from D-glyceraldehyde 3-phosphate: step 4/5. Functionally, catalyzes the reversible conversion of 2-phosphoglycerate (2-PG) into phosphoenolpyruvate (PEP). It is essential for the degradation of carbohydrates via glycolysis. The polypeptide is Enolase (Hamiltonella defensa subsp. Acyrthosiphon pisum (strain 5AT)).